Here is a 728-residue protein sequence, read N- to C-terminus: Microtubule-associated protein VP5 (728 aa).

It belongs to the reoviridae microtubule-associated protein family.

The protein resides in the virion. Its subcellular location is the host cytoplasm. It localises to the host cytoskeleton. Its function is as follows. Minor inner capsid component. Displays NTPase and RNA 5'-triphosphatase (RTPase) activities. May function as a cofactor of polymerase. Associates with microtubules and plays a role in the formation, structural organization and morphology of viral inclusions, where the assembly of cores and the replication of viral RNA occur. The protein is Microtubule-associated protein VP5 (S5) of Aquareovirus C (isolate Golden shiner/USA/GSRV/1977) (AQRV-C).